The following is a 365-amino-acid chain: Succinyl-diaminopimelate desuccinylase (365 aa).

Histidine 65 is a Zn(2+) binding site. Aspartate 67 is an active-site residue. Residue aspartate 96 participates in Zn(2+) binding. Residue glutamate 126 is the Proton acceptor of the active site. Residues glutamate 127, glutamate 155, and histidine 340 each coordinate Zn(2+).

It belongs to the peptidase M20A family. DapE subfamily. As to quaternary structure, homodimer. It depends on Zn(2+) as a cofactor. Co(2+) is required as a cofactor.

It catalyses the reaction N-succinyl-(2S,6S)-2,6-diaminopimelate + H2O = (2S,6S)-2,6-diaminopimelate + succinate. Its pathway is amino-acid biosynthesis; L-lysine biosynthesis via DAP pathway; LL-2,6-diaminopimelate from (S)-tetrahydrodipicolinate (succinylase route): step 3/3. Catalyzes the hydrolysis of N-succinyl-L,L-diaminopimelic acid (SDAP), forming succinate and LL-2,6-diaminopimelate (DAP), an intermediate involved in the bacterial biosynthesis of lysine and meso-diaminopimelic acid, an essential component of bacterial cell walls. In Campylobacter jejuni subsp. jejuni serotype O:23/36 (strain 81-176), this protein is Succinyl-diaminopimelate desuccinylase.